We begin with the raw amino-acid sequence, 194 residues long: Troponin I 4 (194 aa).

The segment at Met-1 to Glu-27 is disordered. Positions Asp-7–Glu-27 are enriched in basic and acidic residues.

The protein belongs to the troponin I family. Expression is detected only in pharyngeal muscle cells from embryos to adults.

Functionally, troponin I is the inhibitory subunit of troponin, the thin filament regulatory complex which confers calcium-sensitivity to muscle actomyosin ATPase activity. This Caenorhabditis elegans protein is Troponin I 4 (tni-4).